The following is a 342-amino-acid chain: Antihemorrhagic factor HSF (342 aa).

A signal peptide spans 1–19 (MNSLVALVLLGQIIGSTLS). 2 consecutive Cystatin fetuin-A-type domains span residues 22-130 (VRGD…VKCH) and 141-254 (RNCS…SNCV). Positions 23–25 (RGD) match the Cell attachment site motif. The tract at residues 24-108 (GDLECDDKEA…RQQHNHAVEM (85 aa)) is indispensable for metalloproteinase inhibition. 6 disulfide bridges follow: Cys28-Cys332, Cys85-Cys96, Cys110-Cys129, Cys143-Cys146, Cys205-Cys217, and Cys230-Cys253. N-linked (GlcNAc...) asparagine glycosylation occurs at Asn142. Asn204 is a glycosylation site (N-linked (GlcNAc...) asparagine). N-linked (GlcNAc...) asparagine glycosylation is present at Asn282.

This sequence belongs to the fetuin family. Cys-63 may exist in a mixed disulfide form with a thiol compound such as glutathione. As to expression, expressed by the liver.

It is found in the secreted. Functionally, inhibits hemorrhagic and proteolytic activities of metalloproteinases (HR1A, HR1B, HR2a, HR2b and H2 proteinase from T.flavodidis and brevilysins H3, H4, H6 and L4 from A.halys brevicaudus). Has no effect on brevilysins H2. Has no effect on papain and cathepsin-B. The sequence is that of Antihemorrhagic factor HSF from Protobothrops flavoviridis (Habu).